Consider the following 94-residue polypeptide: DNA-binding protein HU (94 aa).

Positions Q56–K94 are disordered. Residues K68–V77 are compositionally biased toward basic and acidic residues. The span at P78 to K87 shows a compositional bias: basic residues.

This sequence belongs to the bacterial histone-like protein family. In terms of assembly, homodimer.

Histone-like DNA-binding protein which is capable of wrapping DNA to stabilize it, and thus to prevent its denaturation under extreme environmental conditions. The polypeptide is DNA-binding protein HU (hup) (Helicobacter pylori (strain ATCC 700392 / 26695) (Campylobacter pylori)).